The sequence spans 215 residues: Probable nicotinate-nucleotide adenylyltransferase (215 aa).

It belongs to the NadD family.

It carries out the reaction nicotinate beta-D-ribonucleotide + ATP + H(+) = deamido-NAD(+) + diphosphate. It participates in cofactor biosynthesis; NAD(+) biosynthesis; deamido-NAD(+) from nicotinate D-ribonucleotide: step 1/1. Catalyzes the reversible adenylation of nicotinate mononucleotide (NaMN) to nicotinic acid adenine dinucleotide (NaAD). In Fervidobacterium nodosum (strain ATCC 35602 / DSM 5306 / Rt17-B1), this protein is Probable nicotinate-nucleotide adenylyltransferase.